Reading from the N-terminus, the 174-residue chain is RNA pyrophosphohydrolase (174 aa).

The Nudix hydrolase domain occupies 6-149; that stretch reads GFRANVGIII…KRDVYRKVMK (144 aa). The Nudix box motif lies at 38 to 59; that stretch reads GGVDDGESAEEAMYRELYEEVG.

It belongs to the Nudix hydrolase family. RppH subfamily. The cofactor is a divalent metal cation.

Accelerates the degradation of transcripts by removing pyrophosphate from the 5'-end of triphosphorylated RNA, leading to a more labile monophosphorylated state that can stimulate subsequent ribonuclease cleavage. The protein is RNA pyrophosphohydrolase of Shewanella sp. (strain W3-18-1).